The primary structure comprises 456 residues: MRPYYIAIVGSGPSAFFAAASLLKAADTTEDLDMAVDMLEMLPTPWGLVRSGVAPDHPKIKSISKQFEKTAEDPRFRFFGNVVVGEHVQPGELSERYDAVIYAVGAQSDRMLNIPGEDLPGSIAAVDFVGWYNAHPHFEQVSPDLSGARAVVIGNGNVALDVARILLTDPDVLARTDIADHALESLRPRGIQEVVIVGRRGPLQAAFTTLELRELADLDGVDVVIDPAELDGITDEDAAAVGKVCKQNIKVLRGYADREPRPGHRRMVFRFLTSPIEIKGKRKVERIVLGRNELVSDGSGRVAAKDTGEREELPAQLVVRSVGYRGVPTPGLPFDDQSGTIPNVGGRINGSPNEYVVGWIKRGPTGVIGTNKKDAQDTVDTLIKNLGNAKEGAECKSFPEDHADQVADWLAARQPKLVTSAHWQVIDAFERAAGEPHGRPRVKLASLAELLRIGLG.

4 residues coordinate FAD: Ser-14, Glu-40, Leu-48, and Val-84. NADP(+) is bound by residues Arg-110, 155–158, 199–200, and Glu-211; these read NGNV and RR. FAD-binding positions include Trp-359 and 366-368; that span reads GVI. Gly-366 contacts NADP(+).

Belongs to the ferredoxin--NADP reductase type 1 family. As to quaternary structure, monomer. The cofactor is FAD.

The enzyme catalyses 2 reduced [2Fe-2S]-[ferredoxin] + NADP(+) + H(+) = 2 oxidized [2Fe-2S]-[ferredoxin] + NADPH. In terms of biological role, may serve as electron transfer protein and supply electrons to P450 systems. This Mycobacterium tuberculosis (strain CDC 1551 / Oshkosh) protein is NADPH-ferredoxin reductase FprA (fprA).